We begin with the raw amino-acid sequence, 238 residues long: Outer membrane protein A (238 aa).

The next 5 beta stranded transmembrane spans lie at 1-8, 13-21, 43-52, 57-64, and 83-91; these read LTAKLGYP, LDIYTRLGG, PVFAGGVEYA, IATRLEYQ, and LLSVGVSYR. 3 consecutive repeat copies span residues 104 to 105, 106 to 107, and 108 to 109. Residues 104–109 are 3 X 2 AA tandem repeats of A-P; sequence APAPAP. Residues 111 to 238 enclose the OmpA-like domain; sequence VQTKHFTLKS…RRVEIEVKGI (128 aa). A disulfide bond links cysteine 212 and cysteine 224.

The protein belongs to the outer membrane OOP (TC 1.B.6) superfamily. OmpA family. Monomer and homodimer.

It localises to the cell outer membrane. With TolR probably plays a role in maintaining the position of the peptidoglycan cell wall in the periplasm. Acts as a porin with low permeability that allows slow penetration of small solutes; an internal gate slows down solute passage. The chain is Outer membrane protein A from Citrobacter freundii.